Consider the following 186-residue polypeptide: Nucleoside triphosphate pyrophosphatase (186 aa).

Asp-68 acts as the Proton acceptor in catalysis.

This sequence belongs to the Maf family. A divalent metal cation serves as cofactor.

Its subcellular location is the cytoplasm. The enzyme catalyses a ribonucleoside 5'-triphosphate + H2O = a ribonucleoside 5'-phosphate + diphosphate + H(+). It carries out the reaction a 2'-deoxyribonucleoside 5'-triphosphate + H2O = a 2'-deoxyribonucleoside 5'-phosphate + diphosphate + H(+). Its function is as follows. Nucleoside triphosphate pyrophosphatase. May have a dual role in cell division arrest and in preventing the incorporation of modified nucleotides into cellular nucleic acids. The sequence is that of Nucleoside triphosphate pyrophosphatase from Prochlorococcus marinus (strain MIT 9303).